The chain runs to 119 residues: Large ribosomal subunit protein bL20 (119 aa).

This sequence belongs to the bacterial ribosomal protein bL20 family.

Its function is as follows. Binds directly to 23S ribosomal RNA and is necessary for the in vitro assembly process of the 50S ribosomal subunit. It is not involved in the protein synthesizing functions of that subunit. The protein is Large ribosomal subunit protein bL20 of Metamycoplasma arthritidis (strain 158L3-1) (Mycoplasma arthritidis).